The sequence spans 525 residues: GMP synthase [glutamine-hydrolyzing] (525 aa).

The Glutamine amidotransferase type-1 domain maps to 8–207 (KILILDFGSQ…ALDICGCAAN (200 aa)). Cys85 (nucleophile) is an active-site residue. Active-site residues include His181 and Glu183. In terms of domain architecture, GMPS ATP-PPase spans 208-400 (WKPSSIIEDA…LGLPYNMLYR (193 aa)). 235–241 (SGGVDSS) provides a ligand contact to ATP.

As to quaternary structure, homodimer.

The enzyme catalyses XMP + L-glutamine + ATP + H2O = GMP + L-glutamate + AMP + diphosphate + 2 H(+). Its pathway is purine metabolism; GMP biosynthesis; GMP from XMP (L-Gln route): step 1/1. Functionally, catalyzes the synthesis of GMP from XMP. The chain is GMP synthase [glutamine-hydrolyzing] from Shewanella baltica (strain OS155 / ATCC BAA-1091).